Reading from the N-terminus, the 277-residue chain is Digeranylgeranylglyceryl phosphate synthase (277 aa).

The next 7 helical transmembrane spans lie at 16 to 36, 84 to 104, 107 to 127, 146 to 166, 200 to 220, 221 to 241, and 257 to 277; these read ILAGIVGILGALVAYEGIPDI, ALYYALLQYAIGSILAYFLNI, FVFATIAYFLTFLYGWKLKPL, GAIGVGRIGLAGYLAICAFLV, AIIAAIFGFLTVIASFLPVKV, GIGLGYAPIIIVDIIIIKASI, and LKIATFVAVISFLAGALTKGV.

It belongs to the UbiA prenyltransferase family. DGGGP synthase subfamily. Mg(2+) serves as cofactor.

The protein localises to the cell membrane. It carries out the reaction sn-3-O-(geranylgeranyl)glycerol 1-phosphate + (2E,6E,10E)-geranylgeranyl diphosphate = 2,3-bis-O-(geranylgeranyl)-sn-glycerol 1-phosphate + diphosphate. The protein operates within membrane lipid metabolism; glycerophospholipid metabolism. In terms of biological role, prenyltransferase that catalyzes the transfer of the geranylgeranyl moiety of geranylgeranyl diphosphate (GGPP) to the C2 hydroxyl of (S)-3-O-geranylgeranylglyceryl phosphate (GGGP). This reaction is the second ether-bond-formation step in the biosynthesis of archaeal membrane lipids. The protein is Digeranylgeranylglyceryl phosphate synthase of Pyrococcus furiosus (strain ATCC 43587 / DSM 3638 / JCM 8422 / Vc1).